The following is a 396-amino-acid chain: Diphosphomevalonate decarboxylase (396 aa).

Residues 19–22, Arg74, 153–158, and Thr209 contribute to the (R)-5-diphosphomevalonate site; these read YWGK and SGSACR.

The protein belongs to the diphosphomevalonate decarboxylase family. In terms of assembly, homodimer.

The enzyme catalyses (R)-5-diphosphomevalonate + ATP = isopentenyl diphosphate + ADP + phosphate + CO2. Its pathway is isoprenoid biosynthesis; isopentenyl diphosphate biosynthesis via mevalonate pathway; isopentenyl diphosphate from (R)-mevalonate: step 3/3. Functionally, diphosphomevalonate decarboxylase; part of the second module of ergosterol biosynthesis pathway that includes the middle steps of the pathway. MVD1/ERG19 converts diphosphomevalonate into isopentenyl diphosphate. The second module is carried out in the vacuole and involves the formation of farnesyl diphosphate, which is also an important intermediate in the biosynthesis of ubiquinone, dolichol, heme and prenylated proteins. Activity by the mevalonate kinase ERG12 first converts mevalonate into 5-phosphomevalonate. 5-phosphomevalonate is then further converted to 5-diphosphomevalonate by the phosphomevalonate kinase ERG8. The diphosphomevalonate decarboxylase MVD1/ERG19 then produces isopentenyl diphosphate. The isopentenyl-diphosphate delta-isomerase IDI1 then catalyzes the 1,3-allylic rearrangement of the homoallylic substrate isopentenyl (IPP) to its highly electrophilic allylic isomer, dimethylallyl diphosphate (DMAPP). Finally the farnesyl diphosphate synthase ERG20 catalyzes the sequential condensation of isopentenyl pyrophosphate with dimethylallyl pyrophosphate, and then with the resultant geranylpyrophosphate to the ultimate product farnesyl pyrophosphate. The chain is Diphosphomevalonate decarboxylase from Saccharomyces cerevisiae (strain ATCC 204508 / S288c) (Baker's yeast).